We begin with the raw amino-acid sequence, 693 residues long: Sodium-dependent dopamine transporter (693 aa).

At Met1–Glu56 the chain is on the cytoplasmic side. A discontinuously helical transmembrane segment spans residues Ala57 to Gly95. Na(+)-binding residues include Gly75, Ala77, Val78, Asp79, and Asn82. Asp79 contacts dopamine. The next 2 membrane-spanning stretches (helical) occupy residues Gly96–Gly127 and Ala128–Phe171. Residues Ser149 and Gly153 each coordinate dopamine. Residues Thr172–Pro233 lie on the Extracellular side of the membrane. Residues Cys180 and Cys189 are joined by a disulfide bond. N-linked (GlcNAc...) asparagine glycans are attached at residues Asn181, Asn196, and Asn202. The next 2 helical transmembrane spans lie at Arg234 to Trp253 and Lys254 to Leu284. Residues Pro285–Cys303 are Extracellular-facing. The discontinuously helical transmembrane segment at Glu304–Tyr332 threads the bilayer. A chloride-binding site is contributed by Gln314. Phe317 lines the dopamine pocket. Residues Ser318 and Asn350 each coordinate Na(+). A chloride-binding site is contributed by Ser318. The chain crosses the membrane as a helical span at residues Asn333–Ser373. Ser354 contributes to the chloride binding site. At Val374–Thr397 the chain is on the extracellular side. Transmembrane regions (helical) follow at residues Leu398–His439, Arg440–Asn463, and Gly464–Tyr496. Na(+) is bound by residues Leu415, Asp418, and Ser419. Residues Ser419 and Ala420 each contribute to the dopamine site. Residues Gly497–Pro513 are Cytoplasmic-facing. Residues Ser514 to Thr539 traverse the membrane as a helical segment. Residues Phe540–Phe550 are Extracellular-facing. Residues Pro551–Leu580 form a helical membrane-spanning segment. The interaction with TGFB1I1 stretch occupies residues Gly558–Lys587. The Cytoplasmic portion of the chain corresponds to Pro581–Tyr693.

It belongs to the sodium:neurotransmitter symporter (SNF) (TC 2.A.22) family. SLC6A3 subfamily. Monomer. Homooligomer; disulfide-linked. Interacts with PRKCABP and TGFB1I1. Interacts (via N-terminus) with SYNGR3 (via N-terminus). Interacts with SLC18A2. Interacts with TOR1A (ATP-bound); TOR1A regulates SLC6A3 subcellular location. Interacts with alpha-synuclein/SNCA. Interacts with SEPTIN4. As to expression, expressed in the neurons of the substantia nigra of the brain.

It is found in the cell membrane. The protein localises to the cell projection. Its subcellular location is the neuron projection. It localises to the axon. The enzyme catalyses dopamine(out) + chloride(out) + Na(+)(out) = dopamine(in) + chloride(in) + Na(+)(in). It carries out the reaction (R)-noradrenaline(out) + chloride(out) + Na(+)(out) = (R)-noradrenaline(in) + chloride(in) + Na(+)(in). It catalyses the reaction dopamine(out) + chloride(out) + 2 Na(+)(out) = dopamine(in) + chloride(in) + 2 Na(+)(in). Inhibited by GBR 12909 dihydrochloride, amphetamine and cocaine. Inhibited by zinc ions. In terms of biological role, mediates sodium- and chloride-dependent transport of dopamine. Also mediates sodium- and chloride-dependent transport of norepinephrine (also known as noradrenaline). Regulator of light-dependent retinal hyaloid vessel regression, downstream of OPN5 signaling. The protein is Sodium-dependent dopamine transporter (SLC6A3) of Bos taurus (Bovine).